Consider the following 360-residue polypeptide: MKPSIVAKLEALQERHEEVEAMLGDAGVIADQERFRALSREYAQLTDVSQCFRQWQQSQEDIETAEMMLSDAEMRDMAQEELQTARAASEELEQQLQVLLLPKDPDDERNCYLEVRAGTGGDEAAIFAGDLFRMYSRYAESRRWKVEVMSANEGEHGGYKEVIAKVVGEGAYGRLKFESGGHRVQRVPETESQGRIHTSACTVAVMPELPEAELPDINPSDLKIDTFRSSGAGGQHVNTTDSAIRITHLPTGIVVECQDERSQHKNKAKALGVLGSRIRAAEMARRQQEESSTRRNLLGSGDRSDRNRTYNFPQGRVTDHRINLTIYRLDEAMEGKLDALIEPIVQEYQADQLAALSGQD.

Residue Gln-235 is modified to N5-methylglutamine. The segment covering 284-293 (ARRQQEESST) has biased composition (basic and acidic residues). The disordered stretch occupies residues 284 to 314 (ARRQQEESSTRRNLLGSGDRSDRNRTYNFPQ).

It belongs to the prokaryotic/mitochondrial release factor family. Post-translationally, methylated by PrmC. Methylation increases the termination efficiency of RF1.

It localises to the cytoplasm. Functionally, peptide chain release factor 1 directs the termination of translation in response to the peptide chain termination codons UAG and UAA. This chain is Peptide chain release factor 1, found in Erwinia tasmaniensis (strain DSM 17950 / CFBP 7177 / CIP 109463 / NCPPB 4357 / Et1/99).